The following is a 689-amino-acid chain: Protein asunder (689 aa).

Residues 521 to 550 are a coiled coil; the sequence is NGARLKLSKAKDQYRLLYRELEQLIQLNAT. Disordered stretches follow at residues 591–619 and 665–689; these read SPER…SKRR and GTKD…SVRS. The segment covering 599 to 614 has biased composition (low complexity); it reads SSVGASGSSNSNSLLK. The Nuclear localization signal (NLS) signature appears at 613 to 619; it reads LKASKRR.

It belongs to the Integrator subunit 13 family. Belongs to the multiprotein complex Integrator, at least composed of IntS1, IntS2, IntS3, IntS4, omd/IntS5, IntS6, defl/IntS7, IntS8, IntS9, IntS10, IntS11, IntS12, asun/IntS13, IntS14 and IntS15. The core complex associates with protein phosphatase 2A subunits mts/PP2A and Pp2A-29B, to form the Integrator-PP2A (INTAC) complex. Post-translationally, phosphorylated.

The protein resides in the nucleus. It localises to the cytoplasm. It is found in the perinuclear region. Functionally, component of the integrator complex, a multiprotein complex that terminates RNA polymerase II (Pol II) transcription in the promoter-proximal region of genes. The integrator complex provides a quality checkpoint during transcription elongation by driving premature transcription termination of transcripts that are unfavorably configured for transcriptional elongation: the complex terminates transcription by (1) catalyzing dephosphorylation of the C-terminal domain (CTD) of Pol II subunit Polr2A/Rbp1 and Spt5, and (2) degrading the exiting nascent RNA transcript via endonuclease activity. The integrator complex is also involved in the 3'-end processing of the U7 snRNA, and also the spliceosomal snRNAs U1, U2, U4 and U5. This is Protein asunder (asun) from Drosophila sechellia (Fruit fly).